Consider the following 251-residue polypeptide: Triosephosphate isomerase 1 (251 aa).

9-11 (NWK) contacts substrate. The active-site Electrophile is the His-95. The active-site Proton acceptor is the Glu-167. Residues Gly-173, Ser-213, and 234–235 (GG) each bind substrate.

Belongs to the triosephosphate isomerase family. Homodimer.

The protein resides in the cytoplasm. It carries out the reaction D-glyceraldehyde 3-phosphate = dihydroxyacetone phosphate. It participates in carbohydrate biosynthesis; gluconeogenesis. Its pathway is carbohydrate degradation; glycolysis; D-glyceraldehyde 3-phosphate from glycerone phosphate: step 1/1. Its function is as follows. Involved in the gluconeogenesis. Catalyzes stereospecifically the conversion of dihydroxyacetone phosphate (DHAP) to D-glyceraldehyde-3-phosphate (G3P). This is Triosephosphate isomerase 1 from Listeria innocua serovar 6a (strain ATCC BAA-680 / CLIP 11262).